The primary structure comprises 156 residues: MAKTIYVLNGPNLNMLGTREPDTYGHANLADVEQLCAETAKNFGLAADCRQSNREGELIDFIHEAHAKNAAGIVINAGGYSHTSIALHDALVAVKIPTVEVHISNIHAREDFRHHSFTAKAAFASLSGFGIDGYRLAINGLAAKIGAVDPSNKVKS.

Tyr-24 acts as the Proton acceptor in catalysis. Residues Asn-76, His-82, and Asp-89 each contribute to the substrate site. Residue His-102 is the Proton donor of the active site. Residues 103 to 104 and Arg-113 each bind substrate; that span reads IS.

Belongs to the type-II 3-dehydroquinase family. As to quaternary structure, homododecamer.

The catalysed reaction is 3-dehydroquinate = 3-dehydroshikimate + H2O. It functions in the pathway metabolic intermediate biosynthesis; chorismate biosynthesis; chorismate from D-erythrose 4-phosphate and phosphoenolpyruvate: step 3/7. Its function is as follows. Catalyzes a trans-dehydration via an enolate intermediate. This chain is 3-dehydroquinate dehydratase, found in Nitrobacter winogradskyi (strain ATCC 25391 / DSM 10237 / CIP 104748 / NCIMB 11846 / Nb-255).